The chain runs to 272 residues: Ribosomal RNA small subunit methyltransferase J (272 aa).

S-adenosyl-L-methionine-binding positions include 120–121 (RD), 136–137 (ER), 171–172 (SS), and aspartate 188.

This sequence belongs to the methyltransferase superfamily. RsmJ family.

It localises to the cytoplasm. The catalysed reaction is guanosine(1516) in 16S rRNA + S-adenosyl-L-methionine = N(2)-methylguanosine(1516) in 16S rRNA + S-adenosyl-L-homocysteine + H(+). In terms of biological role, specifically methylates the guanosine in position 1516 of 16S rRNA. The polypeptide is Ribosomal RNA small subunit methyltransferase J (Colwellia psychrerythraea (strain 34H / ATCC BAA-681) (Vibrio psychroerythus)).